The following is a 697-amino-acid chain: Potassium-transporting ATPase ATP-binding subunit (697 aa).

4 helical membrane-spanning segments follow: residues 55–75 (PIMF…FLPS), 79–99 (SIPG…VLFA), 245–265 (LTLI…YLGF), and 271–291 (VLVA…LSAI). The active-site 4-aspartylphosphate intermediate is aspartate 324. ATP-binding positions include aspartate 361, glutamate 365, 393–400 (FKAETRMS), and lysine 412. Residues aspartate 535 and aspartate 539 each contribute to the Mg(2+) site. Transmembrane regions (helical) follow at residues 605 to 625 (FAII…LNIM), 633 to 653 (AILS…PLAM), and 677 to 697 (GGVI…GLFI).

It belongs to the cation transport ATPase (P-type) (TC 3.A.3) family. Type IA subfamily. In terms of assembly, the system is composed of three essential subunits: KdpA, KdpB and KdpC.

It localises to the cell membrane. It catalyses the reaction K(+)(out) + ATP + H2O = K(+)(in) + ADP + phosphate + H(+). In terms of biological role, part of the high-affinity ATP-driven potassium transport (or Kdp) system, which catalyzes the hydrolysis of ATP coupled with the electrogenic transport of potassium into the cytoplasm. This subunit is responsible for energy coupling to the transport system and for the release of the potassium ions to the cytoplasm. The protein is Potassium-transporting ATPase ATP-binding subunit of Bacillus cereus (strain G9842).